The primary structure comprises 458 residues: 3-isopropylmalate dehydratase large subunit (458 aa).

Residues cysteine 339, cysteine 399, and cysteine 402 each coordinate [4Fe-4S] cluster.

This sequence belongs to the aconitase/IPM isomerase family. LeuC type 1 subfamily. As to quaternary structure, heterodimer of LeuC and LeuD. Requires [4Fe-4S] cluster as cofactor.

It carries out the reaction (2R,3S)-3-isopropylmalate = (2S)-2-isopropylmalate. Its pathway is amino-acid biosynthesis; L-leucine biosynthesis; L-leucine from 3-methyl-2-oxobutanoate: step 2/4. Functionally, catalyzes the isomerization between 2-isopropylmalate and 3-isopropylmalate, via the formation of 2-isopropylmaleate. The sequence is that of 3-isopropylmalate dehydratase large subunit from Lactococcus lactis subsp. cremoris (strain MG1363).